We begin with the raw amino-acid sequence, 350 residues long: Uroporphyrinogen decarboxylase (350 aa).

Substrate-binding positions include 28–32 (RQAGR), Phe-47, Asp-78, Tyr-155, Ser-210, and His-325.

This sequence belongs to the uroporphyrinogen decarboxylase family. In terms of assembly, homodimer.

Its subcellular location is the cytoplasm. The catalysed reaction is uroporphyrinogen III + 4 H(+) = coproporphyrinogen III + 4 CO2. Its pathway is porphyrin-containing compound metabolism; protoporphyrin-IX biosynthesis; coproporphyrinogen-III from 5-aminolevulinate: step 4/4. Catalyzes the decarboxylation of four acetate groups of uroporphyrinogen-III to yield coproporphyrinogen-III. The sequence is that of Uroporphyrinogen decarboxylase from Nostoc sp. (strain PCC 7120 / SAG 25.82 / UTEX 2576).